We begin with the raw amino-acid sequence, 1294 residues long: Unconventional myosin-VI (1294 aa).

The Myosin N-terminal SH3-like domain occupies 2–53 (EDGKPVWAPHPTDGFQMGNIVDIGPDSLTIEPLNQKGKTFLALINQVFPAEE). The 715-residue stretch at 57–771 (KDVEDNCSLM…KFAEFDQIMK (715 aa)) folds into the Myosin motor domain. 151–158 (GESGAGKT) lines the ATP pocket. The residue at position 267 (S267) is a Phosphoserine. A responsible for slow ATPase activity region spans residues 273–317 (YLNRGCTRYFANKETDKQILQNRKSPEYLKAGSMKDPLLDDHGDF). T405 is subject to Phosphothreonine. Position 604 is a phosphoserine (S604). The interval 665-672 (FIRCIKPN) is actin-binding. Residues 782 to 810 (KRVNHWLTCSRWKKVQWCSLSVIKLKNKI) are required for binding calmodulin. The IQ domain maps to 814 to 834 (AEACIKMQKTIRMWLCKRRHK). The segment at 835–916 (PRIDGLVKVG…EELLSALQKK (82 aa)) is three-helix bundle. The segment at 917–984 (KQQEEEAERL…EDDEKRIQAE (68 aa)) is SAH. The tract at residues 934–955 (EKERKRREEDEKRRRKEEEERR) is disordered. A Phosphoserine modification is found at S1025. Positions 1060–1285 (KEMSEFLSRG…ESRQARPTYA (226 aa)) are interaction with TAX1BP1 and CALCOCO2/NDP52. The segment at 1116 to 1118 (RRL) is interaction with OPTN. S1155 is subject to Phosphoserine. The interval 1157-1285 (QQNPAAQIPA…ESRQARPTYA (129 aa)) is interaction with TOM1.

Belongs to the TRAFAC class myosin-kinesin ATPase superfamily. Myosin family. In terms of assembly, homodimer; dimerization seems to implicate the unfolding of the three-helix bundle region creating an additional calmodulin binding site, and cargo binding. Able to function as a monomer under specific conditions in vitro. Forms a complex with CFTR and DAB2 in the apical membrane of epithelial cells. Component of the DISP/DOCK7-induced septin displacement complex, at least composed of DOCK7, LRCH3 and MYO6. Binding to calmodulin through a unique insert, not found in other myosins, located in the neck region between the motor domain and the IQ domain appears to contribute to the directionality reversal. This interaction occurs only if the C-terminal lobe of calmodulin is occupied by calcium. Interaction with F-actin/ACTN1 occurs only at the apical brush border domain of the proximal tubule cells. Interacts with DAB2. In vitro, the C-terminal globular tail binds a C-terminal region of DAB2. Interacts with CFTR. Interacts with CABP5. Interacts with TOM1. Interacts with OPTN. Interacts with TAX1BP1 and CALCOCO2/NDP52. Interacts with TOM1L2. Interacts with CLIC5; may work together in a complex which also includes RDX and MYO6 to stabilize linkages between the plasma membrane and subjacent actin cytoskeleton at the base of stereocilia. Phosphorylation in the motor domain, induced by EGF, results in translocation of MYO6 from the cell surface to membrane ruffles and affects F-actin dynamics. Phosphorylated in vitro by p21-activated kinase (PAK). Expressed in most tissues examined including heart, brain, placenta, pancreas, spleen, thymus, prostate, testis, ovary, small intestine and colon. Highest levels in brain, pancreas, testis and small intestine. Also expressed in fetal brain and cochlea. Isoform 1 and isoform 2, containing the small insert, and isoform 4, containing neither insert, are expressed in unpolarized epithelial cells.

It localises to the golgi apparatus. It is found in the trans-Golgi network membrane. Its subcellular location is the nucleus. The protein resides in the cytoplasm. The protein localises to the perinuclear region. It localises to the membrane. It is found in the clathrin-coated pit. Its subcellular location is the cytoplasmic vesicle. The protein resides in the clathrin-coated vesicle. The protein localises to the cell projection. It localises to the filopodium. It is found in the ruffle membrane. Its subcellular location is the microvillus. The protein resides in the cytosol. The protein localises to the autophagosome. It localises to the endosome. It is found in the clathrin-coated vesicle membrane. Functionally, myosins are actin-based motor molecules with ATPase activity. Unconventional myosins serve in intracellular movements. Myosin 6 is a reverse-direction motor protein that moves towards the minus-end of actin filaments. Has slow rate of actin-activated ADP release due to weak ATP binding. Functions in a variety of intracellular processes such as vesicular membrane trafficking and cell migration. Required for the structural integrity of the Golgi apparatus via the p53-dependent pro-survival pathway. Appears to be involved in a very early step of clathrin-mediated endocytosis in polarized epithelial cells. Together with TOM1, mediates delivery of endocytic cargo to autophagosomes thereby promoting autophagosome maturation and driving fusion with lysosomes. Links TOM1 with autophagy receptors, such as TAX1BP1; CALCOCO2/NDP52 and OPTN. May act as a regulator of F-actin dynamics. As part of the DISP complex, may regulate the association of septins with actin and thereby regulate the actin cytoskeleton. May play a role in transporting DAB2 from the plasma membrane to specific cellular targets. May play a role in the extension and network organization of neurites. Required for structural integrity of inner ear hair cells. Required for the correct localization of CLIC5 and RDX at the stereocilium base. Modulates RNA polymerase II-dependent transcription. This Homo sapiens (Human) protein is Unconventional myosin-VI.